We begin with the raw amino-acid sequence, 135 residues long: Transcriptional regulator HosA (135 aa).

Residues 4-134 (RNKAFHQLRQ…FMQLVRKMMN (131 aa)) enclose the HTH marR-type domain. The H-T-H motif DNA-binding region spans 48 to 71 (QVALIEAAVSTKATLAEMLARMEN).

Involved in the temperature-dependent positive control of flagellum-driven swimming motility and cellular aggregation. Regulates fliC expression by directly interacting with fliC promoter. This chain is Transcriptional regulator HosA (hosA), found in Escherichia coli O111:H-.